Here is a 730-residue protein sequence, read N- to C-terminus: DNA ligase (730 aa).

A disordered region spans residues 1 to 23 (MAGEQHAQPTSVPAEAREKHAQL). NAD(+) is bound by residues 44–48 (DAEFD), 93–94 (SL), and glutamate 124. The active-site N6-AMP-lysine intermediate is the lysine 126. Residues arginine 147, glutamate 184, lysine 300, and lysine 324 each coordinate NAD(+). Zn(2+)-binding residues include cysteine 418, cysteine 421, cysteine 437, and cysteine 443. The 90-residue stretch at 638-727 (EGPRPLEGLT…PEAAAEVALP (90 aa)) folds into the BRCT domain.

It belongs to the NAD-dependent DNA ligase family. LigA subfamily. It depends on Mg(2+) as a cofactor. Mn(2+) is required as a cofactor.

It catalyses the reaction NAD(+) + (deoxyribonucleotide)n-3'-hydroxyl + 5'-phospho-(deoxyribonucleotide)m = (deoxyribonucleotide)n+m + AMP + beta-nicotinamide D-nucleotide.. Functionally, DNA ligase that catalyzes the formation of phosphodiester linkages between 5'-phosphoryl and 3'-hydroxyl groups in double-stranded DNA using NAD as a coenzyme and as the energy source for the reaction. It is essential for DNA replication and repair of damaged DNA. In Streptomyces avermitilis (strain ATCC 31267 / DSM 46492 / JCM 5070 / NBRC 14893 / NCIMB 12804 / NRRL 8165 / MA-4680), this protein is DNA ligase.